A 336-amino-acid chain; its full sequence is tRNA N6-adenosine threonylcarbamoyltransferase (336 aa).

Fe cation-binding residues include His-111 and His-115. Residues 134–138 (VVSGG), Asp-167, Gly-180, Asp-184, and Asn-272 contribute to the substrate site. Asp-300 lines the Fe cation pocket.

The protein belongs to the KAE1 / TsaD family. It depends on Fe(2+) as a cofactor.

The protein localises to the cytoplasm. It catalyses the reaction L-threonylcarbamoyladenylate + adenosine(37) in tRNA = N(6)-L-threonylcarbamoyladenosine(37) in tRNA + AMP + H(+). Functionally, required for the formation of a threonylcarbamoyl group on adenosine at position 37 (t(6)A37) in tRNAs that read codons beginning with adenine. Is involved in the transfer of the threonylcarbamoyl moiety of threonylcarbamoyl-AMP (TC-AMP) to the N6 group of A37, together with TsaE and TsaB. TsaD likely plays a direct catalytic role in this reaction. This is tRNA N6-adenosine threonylcarbamoyltransferase from Caldicellulosiruptor bescii (strain ATCC BAA-1888 / DSM 6725 / KCTC 15123 / Z-1320) (Anaerocellum thermophilum).